The following is a 337-amino-acid chain: Ketol-acid reductoisomerase (NADP(+)) (337 aa).

The KARI N-terminal Rossmann domain occupies 1 to 180 (MQVYYDKDAD…GGTKGGVIET (180 aa)). Residues 24-27 (YGSQ), R47, and S51 contribute to the NADP(+) site. H106 is an active-site residue. G132 contributes to the NADP(+) binding site. One can recognise a KARI C-terminal knotted domain in the interval 181 to 326 (TFREETETDL…AQLRAMMPWI (146 aa)). Residues D189, E193, E225, and E229 each contribute to the Mg(2+) site. S250 contacts substrate.

Belongs to the ketol-acid reductoisomerase family. It depends on Mg(2+) as a cofactor.

It catalyses the reaction (2R)-2,3-dihydroxy-3-methylbutanoate + NADP(+) = (2S)-2-acetolactate + NADPH + H(+). The enzyme catalyses (2R,3R)-2,3-dihydroxy-3-methylpentanoate + NADP(+) = (S)-2-ethyl-2-hydroxy-3-oxobutanoate + NADPH + H(+). Its pathway is amino-acid biosynthesis; L-isoleucine biosynthesis; L-isoleucine from 2-oxobutanoate: step 2/4. The protein operates within amino-acid biosynthesis; L-valine biosynthesis; L-valine from pyruvate: step 2/4. In terms of biological role, involved in the biosynthesis of branched-chain amino acids (BCAA). Catalyzes an alkyl-migration followed by a ketol-acid reduction of (S)-2-acetolactate (S2AL) to yield (R)-2,3-dihydroxy-isovalerate. In the isomerase reaction, S2AL is rearranged via a Mg-dependent methyl migration to produce 3-hydroxy-3-methyl-2-ketobutyrate (HMKB). In the reductase reaction, this 2-ketoacid undergoes a metal-dependent reduction by NADPH to yield (R)-2,3-dihydroxy-isovalerate. The chain is Ketol-acid reductoisomerase (NADP(+)) from Neisseria meningitidis serogroup A / serotype 4A (strain DSM 15465 / Z2491).